A 463-amino-acid chain; its full sequence is Argininosuccinate lyase (463 aa).

It belongs to the lyase 1 family. Argininosuccinate lyase subfamily.

It localises to the cytoplasm. The enzyme catalyses 2-(N(omega)-L-arginino)succinate = fumarate + L-arginine. It participates in amino-acid biosynthesis; L-arginine biosynthesis; L-arginine from L-ornithine and carbamoyl phosphate: step 3/3. The sequence is that of Argininosuccinate lyase from Streptococcus pneumoniae (strain JJA).